Consider the following 413-residue polypeptide: Peptide chain release factor 1, mitochondrial (413 aa).

The residue at position 287 (Gln-287) is an N5-methylglutamine. Residues 335 to 363 (RLEKEEKERKARKSQVSSTNRSDKIRTYN) form a disordered region.

Belongs to the prokaryotic/mitochondrial release factor family. Methylation of glutamine in the GGQ triplet is conserved from bacteria to mammals. N5-methylated on Gln-287 by MTQ1.

It is found in the mitochondrion. In terms of biological role, mitochondrial peptide chain release factor that directs the termination of translation in response to the peptide chain termination codons UAA and UAG. The protein is Peptide chain release factor 1, mitochondrial (MRF1) of Saccharomyces cerevisiae (strain ATCC 204508 / S288c) (Baker's yeast).